The sequence spans 509 residues: Zinc finger CCCH-type with G patch domain-containing protein (509 aa).

The C3H1-type zinc-finger motif lies at 155–178 (PCNYYLEGECRFDEIRCRYSHGAL). Positions 254-277 (EDELTSEDSSSSPHDESSDEIDSD) are disordered. A G-patch domain is found at 310-356 (TRGIGSKLMEKMGYIHGTGLGSEGRGIVTPVSAQILPQGRSLDACME). Residues 407-430 (LGGGESRHQGDQAAKKAKTNDLQQ) form a disordered region. Residues 411 to 420 (ESRHQGDQAA) show a composition bias toward basic and acidic residues.

It is found in the nucleus. Functionally, transcription repressor. The protein is Zinc finger CCCH-type with G patch domain-containing protein of Drosophila pseudoobscura pseudoobscura (Fruit fly).